We begin with the raw amino-acid sequence, 75 residues long: Large ribosomal subunit protein bL28 (75 aa).

This sequence belongs to the bacterial ribosomal protein bL28 family.

The sequence is that of Large ribosomal subunit protein bL28 from Buchnera aphidicola subsp. Acyrthosiphon pisum (strain 5A).